The sequence spans 122 residues: Toxin CSTX-1 (122 aa).

An N-terminal signal peptide occupies residues 1–20 (MKVLIISAVLFITIFSNISA). Residues 21–47 (EIEDDFLEDESFEAEDIIPFFENEQAR) constitute a propeptide that is removed on maturation. 4 disulfide bridges follow: cysteine 49–cysteine 64, cysteine 56–cysteine 73, cysteine 63–cysteine 91, and cysteine 75–cysteine 89. A predicted alpha-helix region spans residues 99–112 (AIETGLNIFRGLFK). At arginine 108 the chain carries Arginine amide; in CSTX-2a. Lysine 121 carries the post-translational modification Lysine amide; in omega-ctenitoxin-Cs1a.

Belongs to the neurotoxin 19 (CSTX) family. 04 (U1-Lctx) subfamily. In terms of assembly, monomer. Interacts with CSTX-13 (AC P83919) (Kd=430 nM), but does not interact with CSTX-9 (AC P58604). Expressed by the venom gland.

The protein localises to the secreted. The protein resides in the target cell membrane. Spider venom toxin that shows calcium channel blocking activity and exhibits cytolytic activity by affecting the outer leaflet curvature and/or pore formation across the membrane. It blocks L-type calcium channels (Cav1/CACNA1) in mammalian neurons at nanomolar concentrations. Furthermore, it produces a slow voltage-independent block of mid/low and high voltage-activated calcium channels in cockroach neurons. Potassium ions, histamine, M-ctenitoxin-Cs1a (AC P83619), CSTX-9 (AC P58604), and CSTX-13 (AC P83919) synergistically increase the insecticidal activity of this toxin. In vivo, it causes paralysis in blow flies and provokes death in drosophila. Functionally, blocks voltage-activated calcium channels (Cav). Does not induce cell membrane permeability increase when tested on Xenopus oocytes. No alpha-helical structures are detectable. Is 7-fold less neurotoxic than omega-ctenitoxin-Cs1a on drosophila flies. Its function is as follows. Blocks voltage-activated calcium channels (Cav). Is 190-fold less neurotoxic than omega-ctenitoxin-Cs1a on drosophila flies. The sequence is that of Toxin CSTX-1 from Cupiennius salei (American wandering spider).